The sequence spans 212 residues: Nucleoside diphosphate kinase homolog 5 (212 aa).

An NDK region spans residues 13 to 145 (EKTLAIIKPD…EREIRFMFPE (133 aa)).

Belongs to the NDK family. In terms of assembly, component of the axonemal radial spoke complex 1 (RS1), at least composed of spoke head proteins RSPH1, RSPH3, RSPH9 and the cilia-specific component RSPH4A or sperm-specific component RSPH6A, spoke stalk proteins RSPH14, DNAJB13, DYDC1, ROPN1L and NME5, and the anchor protein IQUB. Interacts with IQUB. In terms of tissue distribution, specifically expressed in testis germinal cells.

The protein resides in the cell projection. It is found in the cilium. Its subcellular location is the cytoplasm. The protein localises to the cytoskeleton. It localises to the flagellum axoneme. In terms of biological role, functions as part of axonemal radial spoke complexes that play an important part in the motility of sperm and cilia. Does not seem to have nucleoside diphosphate kinase (NDPK) activity. Confers protection from cell death by BAX and alters the cellular levels of several antioxidant enzymes including GPX5. May play a role in spermiogenesis by increasing the ability of late-stage spermatids to eliminate reactive oxygen species. Exhibits a 3'-5' exonuclease activity with a preference for single-stranded DNA, suggesting roles in DNA proofreading and repair. The sequence is that of Nucleoside diphosphate kinase homolog 5 from Homo sapiens (Human).